The sequence spans 707 residues: Protein kinase C theta type (707 aa).

Residues 1 to 107 enclose the C2 domain; it reads MSPFLRIGLS…KNNGRTEIWL (107 aa). Tyr-90 is subject to Phosphotyrosine; by LCK. The Phorbol-ester/DAG-type 1 zinc-finger motif lies at 159–209; the sequence is CHEFTATFFPQPTFCSVCHEFVWGLNKQGYQCRRCNAAIHKKCIDKVIAKC. Phosphothreonine; by autocatalysis is present on Thr-219. A Phorbol-ester/DAG-type 2 zinc finger spans residues 231 to 281; that stretch reads PHRFKVYNYKSPTFCEHCGTLLWGLARQGLKCDACGMNVHHRCQTKVANLC. A Phosphoserine modification is found at Ser-348. One can recognise a Protein kinase domain in the interval 380 to 634; it reads FILHKMLGKG…RGDIRQHPLF (255 aa). ATP is bound by residues 386–394 and Lys-409; that span reads LGKGSFGKV. The Proton acceptor role is filled by Asp-504. Position 538 is a phosphothreonine; by PDPK1 (Thr-538). Residues 635 to 706 enclose the AGC-kinase C-terminal domain; that stretch reads REINWEELER…INPGMETLIC (72 aa). Phosphoserine is present on residues Ser-676 and Ser-685. Position 695 is a phosphoserine; by autocatalysis (Ser-695).

Belongs to the protein kinase superfamily. AGC Ser/Thr protein kinase family. PKC subfamily. As to quaternary structure, part of a membrane raft complex composed at least of BCL10, CARD11, MALT1 and IKBKB. Interacts with GLRX3 (via N-terminus). Interacts with ECT2. Interacts with CCDC88A/GIV; the interaction leads to phosphorylation of CCDC88A and inhibition of its guanine nucleotide exchange factor activity. Interacts with CD28. Mg(2+) is required as a cofactor. Post-translationally, autophosphorylation at Thr-219 is required for targeting to the TCR and cellular function of PRKCQ upon antigen receptor ligation. Following TCR stimulation, phosphorylated at Tyr-90 and Ser-685.

The protein resides in the cytoplasm. It is found in the cell membrane. The catalysed reaction is L-seryl-[protein] + ATP = O-phospho-L-seryl-[protein] + ADP + H(+). It catalyses the reaction L-threonyl-[protein] + ATP = O-phospho-L-threonyl-[protein] + ADP + H(+). Its activity is regulated as follows. Novel PKCs (PRKCD, PRKCE, PRKCH and PRKCQ) are calcium-insensitive, but activated by diacylglycerol (DAG) and phosphatidylserine. Three specific sites; Thr-538 (activation loop of the kinase domain), Ser-676 (turn motif) and Ser-695 (hydrophobic region), need to be phosphorylated for its full activation. Functionally, calcium-independent, phospholipid- and diacylglycerol (DAG)-dependent serine/threonine-protein kinase that mediates non-redundant functions in T-cell receptor (TCR) signaling, including T-cells activation, proliferation, differentiation and survival, by mediating activation of multiple transcription factors such as NF-kappa-B, JUN, NFATC1 and NFATC2. In TCR-CD3/CD28-co-stimulated T-cells, is required for the activation of NF-kappa-B and JUN, which in turn are essential for IL2 production, and participates in the calcium-dependent NFATC1 and NFATC2 transactivation. Mediates the activation of the canonical NF-kappa-B pathway (NFKB1) by direct phosphorylation of CARD11 on several serine residues, inducing CARD11 association with lipid rafts and recruitment of the BCL10-MALT1 complex, which then activates IKK complex, resulting in nuclear translocation and activation of NFKB1. May also play an indirect role in activation of the non-canonical NF-kappa-B (NFKB2) pathway. In the signaling pathway leading to JUN activation, acts by phosphorylating the mediator STK39/SPAK and may not act through MAP kinases signaling. Plays a critical role in TCR/CD28-induced NFATC1 and NFATC2 transactivation by participating in the regulation of reduced inositol 1,4,5-trisphosphate generation and intracellular calcium mobilization. After costimulation of T-cells through CD28 can phosphorylate CBLB and is required for the ubiquitination and subsequent degradation of CBLB, which is a prerequisite for the activation of TCR. During T-cells differentiation, plays an important role in the development of T-helper 2 (Th2) cells following immune and inflammatory responses, and, in the development of inflammatory autoimmune diseases, is necessary for the activation of IL17-producing Th17 cells. May play a minor role in Th1 response. Upon TCR stimulation, mediates T-cell protective survival signal by phosphorylating BAD, thus protecting T-cells from BAD-induced apoptosis, and by up-regulating BCL-X(L)/BCL2L1 levels through NF-kappa-B and JUN pathways. In platelets, regulates signal transduction downstream of the ITGA2B, CD36/GP4, F2R/PAR1 and F2RL3/PAR4 receptors, playing a positive role in 'outside-in' signaling and granule secretion signal transduction. May relay signals from the activated ITGA2B receptor by regulating the uncoupling of WASP and WIPF1, thereby permitting the regulation of actin filament nucleation and branching activity of the Arp2/3 complex. May mediate inhibitory effects of free fatty acids on insulin signaling by phosphorylating IRS1, which in turn blocks IRS1 tyrosine phosphorylation and downstream activation of the PI3K/AKT pathway. Phosphorylates MSN (moesin) in the presence of phosphatidylglycerol or phosphatidylinositol. Phosphorylates PDPK1 at 'Ser-504' and 'Ser-532' and negatively regulates its ability to phosphorylate PKB/AKT1. Phosphorylates CCDC88A/GIV and inhibits its guanine nucleotide exchange factor activity. Phosphorylates and activates LRRK1, which phosphorylates RAB proteins involved in intracellular trafficking. The protein is Protein kinase C theta type (Prkcq) of Rattus norvegicus (Rat).